The sequence spans 335 residues: Ornithine carbamoyltransferase 2, catabolic (335 aa).

Carbamoyl phosphate contacts are provided by residues 62-65, Q89, R113, and 140-143; these read STRT and HPTQ. L-ornithine-binding positions include N172, D236, and 240-241; that span reads SM. Residues 277–278 and R322 each bind carbamoyl phosphate; that span reads CL.

This sequence belongs to the aspartate/ornithine carbamoyltransferase superfamily. OTCase family.

The protein localises to the cytoplasm. The catalysed reaction is carbamoyl phosphate + L-ornithine = L-citrulline + phosphate + H(+). It functions in the pathway amino-acid degradation; L-arginine degradation via ADI pathway; carbamoyl phosphate from L-arginine: step 2/2. In terms of biological role, reversibly catalyzes the transfer of the carbamoyl group from carbamoyl phosphate (CP) to the N(epsilon) atom of ornithine (ORN) to produce L-citrulline. The chain is Ornithine carbamoyltransferase 2, catabolic (arcB2) from Staphylococcus epidermidis (strain ATCC 12228 / FDA PCI 1200).